The chain runs to 86 residues: Small muscular protein (86 aa).

The interval 20–64 (MGAFRPGAGQPPRRKECTPEVEEGVPPTSDEEKKPIPGAKKLPGP) is disordered.

It belongs to the SMPX family.

In terms of biological role, plays a role in the regulatory network through which muscle cells coordinate their structural and functional states during growth, adaptation, and repair. The protein is Small muscular protein (SMPX) of Pongo abelii (Sumatran orangutan).